The primary structure comprises 257 residues: Ribonuclease HII (257 aa).

One can recognise an RNase H type-2 domain in the interval 72 to 257 (TYIAGIDEVG…FAPIKDMIQK (186 aa)). A divalent metal cation is bound by residues Asp-78, Glu-79, and Asp-170.

This sequence belongs to the RNase HII family. The cofactor is Mn(2+). It depends on Mg(2+) as a cofactor.

The protein localises to the cytoplasm. The enzyme catalyses Endonucleolytic cleavage to 5'-phosphomonoester.. Functionally, endonuclease that specifically degrades the RNA of RNA-DNA hybrids. This is Ribonuclease HII from Bacillus cereus (strain ZK / E33L).